Consider the following 412-residue polypeptide: N-carbamoyl-L-amino-acid amidohydrolase (412 aa).

Residues H82, D93, E128, and H193 each contribute to the a divalent metal cation site. Residues Q196, H229, N278, R291, and G360 each contribute to the an N-carbamoyl-L-alpha-amino acid site. Residues 212–330 (SIVGVRALRV…DVDEFFNLSP (119 aa)) are involved in dimerization. H385 lines the a divalent metal cation pocket.

The protein belongs to the peptidase M20 family. Homodimer. The cofactor is Mn(2+). Ni(2+) is required as a cofactor. Co(2+) serves as cofactor. It depends on Fe(2+) as a cofactor.

The catalysed reaction is an N-carbamoyl-L-alpha-amino acid + H2O + 2 H(+) = an L-alpha-amino acid + NH4(+) + CO2. It carries out the reaction N-carbamoyl-L-tryptophan + H2O + 2 H(+) = L-tryptophan + NH4(+) + CO2. The enzyme catalyses N-carbamoyl-L-tyrosine + H2O + 2 H(+) = L-tyrosine + NH4(+) + CO2. It catalyses the reaction N-carbamoyl-L-phenylalanine + H2O + 2 H(+) = L-phenylalanine + NH4(+) + CO2. Catalyzes the hydrolysis of aliphatic N-carbamoyl-L-alpha-amino acids to free L-alpha-amino acids. Is strictly L-specific since it is inactive toward N-carbamoyl-D-alpha-amino acids. Shows a preference for aromatic N-carbamoyl-L-alpha-amino acids, such as N-carbamoyl-L-tryptophan and N-carbamoyl-L-tyrosine and, to a lesser extent, N-carbamoyl-L-phenylalanine and the non-natural amino acid N-carbamoyl-L-thienylalanine. Carbamoyl derivatives of beta-alanine and charged aliphatic amino acids are not accepted as substrates. This is N-carbamoyl-L-amino-acid amidohydrolase from Paenarthrobacter aurescens (Arthrobacter aurescens).